Reading from the N-terminus, the 206-residue chain is Ribosomal RNA small subunit methyltransferase G (206 aa).

Residues Gly-74, Leu-79, 125–126 (VE), and Arg-140 contribute to the S-adenosyl-L-methionine site.

The protein belongs to the methyltransferase superfamily. RNA methyltransferase RsmG family.

It is found in the cytoplasm. It catalyses the reaction guanosine(527) in 16S rRNA + S-adenosyl-L-methionine = N(7)-methylguanosine(527) in 16S rRNA + S-adenosyl-L-homocysteine. In terms of biological role, specifically methylates the N7 position of guanine in position 527 of 16S rRNA. This chain is Ribosomal RNA small subunit methyltransferase G, found in Shewanella sp. (strain MR-4).